We begin with the raw amino-acid sequence, 191 residues long: Adenylate kinase (191 aa).

Residue 12-17 (GSGKTT) participates in ATP binding. The tract at residues 33–62 (STGDLLRAEVASGSELGKLIDSFISKGNLV) is NMP. Residues Thr34, Arg39, 60-62 (NLV), 87-90 (GYPR), and Gln94 each bind AMP. Residues 129–135 (GRARGAD) are LID. Position 130 (Arg130) interacts with ATP. Residues Arg132 and Arg144 each coordinate AMP. An ATP-binding site is contributed by Arg172.

This sequence belongs to the adenylate kinase family. In terms of assembly, monomer.

The protein localises to the cytoplasm. The enzyme catalyses AMP + ATP = 2 ADP. The protein operates within purine metabolism; AMP biosynthesis via salvage pathway; AMP from ADP: step 1/1. Functionally, catalyzes the reversible transfer of the terminal phosphate group between ATP and AMP. Plays an important role in cellular energy homeostasis and in adenine nucleotide metabolism. The protein is Adenylate kinase of Campylobacter fetus subsp. fetus (strain 82-40).